We begin with the raw amino-acid sequence, 510 residues long: ATP synthase subunit alpha (510 aa).

An ATP-binding site is contributed by 169 to 176 (GDRQTGKT).

The protein belongs to the ATPase alpha/beta chains family. In terms of assembly, F-type ATPases have 2 components, CF(1) - the catalytic core - and CF(0) - the membrane proton channel. CF(1) has five subunits: alpha(3), beta(3), gamma(1), delta(1), epsilon(1). CF(0) has four main subunits: a(1), b(1), b'(1) and c(9-12).

It localises to the cell inner membrane. The catalysed reaction is ATP + H2O + 4 H(+)(in) = ADP + phosphate + 5 H(+)(out). Produces ATP from ADP in the presence of a proton gradient across the membrane. The alpha chain is a regulatory subunit. This chain is ATP synthase subunit alpha, found in Rhodopseudomonas palustris (strain HaA2).